We begin with the raw amino-acid sequence, 348 residues long: Macrophage-capping protein (348 aa).

Methionine 1 carries the N-acetylmethionine modification. A Gelsolin-like 1 repeat occupies 27–75 (EKLKPVPVAQENQGVFFSGDSYLVLHNGPEEVSHLHLWIGQQSSRDEQG). The Nuclear localization signal motif lies at 137–146 (KKLYQVKGKK). 2 Gelsolin-like repeats span residues 148 to 188 (IRAT…LERN) and 261 to 307 (MNLT…KERQ). Serine 337 carries the phosphoserine modification.

Belongs to the villin/gelsolin family. In terms of assembly, interacts with NUP62. Interacts with NUTF2 and RAN; involved in CAPG nuclear import. In terms of processing, the N-terminus is blocked. As to expression, macrophages and macrophage-like cells.

The protein resides in the nucleus. It is found in the cytoplasm. Its subcellular location is the melanosome. The protein localises to the cell projection. It localises to the lamellipodium. The protein resides in the ruffle. In terms of biological role, calcium-sensitive protein which reversibly blocks the barbed ends of actin filaments but does not sever preformed actin filaments. May play an important role in macrophage function. May play a role in regulating cytoplasmic and/or nuclear structures through potential interactions with actin. May bind DNA. This Homo sapiens (Human) protein is Macrophage-capping protein (CAPG).